Reading from the N-terminus, the 564-residue chain is Protein CPR-5 (564 aa).

Residues 1–87 (MEALLLPPSP…TSNSNSTKRV (87 aa)) are disordered. Over residues 12-28 (PQNQITNPANSKPNHQS) the composition is skewed to polar residues. Basic and acidic residues predominate over residues 29-38 (GDVHKDETMM). The segment covering 69–84 (SSSYCSTSSTSNSNST) has biased composition (low complexity). The next 5 helical transmembrane spans lie at 347-367 (IMDWLLVSVFSMLASMVLGVY), 411-431 (VRVWVQIFFGVLMIIVFTYFL), 443-463 (PISFIVLFLGIFCGVSGKLCV), 472-492 (LWLIVWEVFCLLQFVANVFTL), and 526-546 (VYVVILFVLPVINGLLPFATF).

As to quaternary structure, interacts with SIM and SMR1. As to expression, ubiquitous.

The protein resides in the membrane. The protein localises to the nucleus membrane. In terms of biological role, may play a role in transcriptional processes. Negatively regulates the senescence and chlorotic lesions induced by biotic (e.g. pathogens) and abiotic (e.g. sugars, darkness) agents, probably by controlling programmed cell death (pcd). Negative regulator of plant programmed cell death (PCD) and effector-triggered immunity (ETI). Promotes cell division and endoreduplication (e.g. in trichomes). This is Protein CPR-5 from Arabidopsis thaliana (Mouse-ear cress).